A 395-amino-acid chain; its full sequence is S-adenosylmethionine synthase (395 aa).

His14 contacts ATP. Residue Asp16 participates in Mg(2+) binding. Glu42 serves as a coordination point for K(+). L-methionine is bound by residues Glu55 and Gln98. The segment at 98–108 (QSPDIALGVDK) is flexible loop. Residues 175 to 177 (DGK), 242 to 243 (RF), Asp251, 257 to 258 (RK), Ala274, and Lys278 each bind ATP. Residue Asp251 participates in L-methionine binding. Position 282 (Lys282) interacts with L-methionine.

This sequence belongs to the AdoMet synthase family. Homotetramer; dimer of dimers. The cofactor is Mg(2+). K(+) is required as a cofactor.

Its subcellular location is the cytoplasm. The catalysed reaction is L-methionine + ATP + H2O = S-adenosyl-L-methionine + phosphate + diphosphate. Its pathway is amino-acid biosynthesis; S-adenosyl-L-methionine biosynthesis; S-adenosyl-L-methionine from L-methionine: step 1/1. Its function is as follows. Catalyzes the formation of S-adenosylmethionine (AdoMet) from methionine and ATP. The overall synthetic reaction is composed of two sequential steps, AdoMet formation and the subsequent tripolyphosphate hydrolysis which occurs prior to release of AdoMet from the enzyme. The polypeptide is S-adenosylmethionine synthase (Thermosipho africanus (strain TCF52B)).